The following is a 491-amino-acid chain: Probable Xaa-Pro aminopeptidase AFLA_084750 (491 aa).

D271, D282, E419, and E458 together coordinate Mn(2+).

It belongs to the peptidase M24B family. The cofactor is Mn(2+).

It carries out the reaction Release of any N-terminal amino acid, including proline, that is linked to proline, even from a dipeptide or tripeptide.. Functionally, catalyzes the removal of a penultimate prolyl residue from the N-termini of peptides. The polypeptide is Probable Xaa-Pro aminopeptidase AFLA_084750 (Aspergillus flavus (strain ATCC 200026 / FGSC A1120 / IAM 13836 / NRRL 3357 / JCM 12722 / SRRC 167)).